A 201-amino-acid polypeptide reads, in one-letter code: uncharacterized protein (201 aa).

The helical transmembrane segment at 11–31 (IWKSLYLLIIVGMLYIGYILI) threads the bilayer.

The protein resides in the membrane. This is an uncharacterized protein from Rickettsia prowazekii (strain Madrid E).